We begin with the raw amino-acid sequence, 295 residues long: uncharacterized protein (295 aa).

NAD(+) contacts are provided by residues 11-25 and Thr-101; that span reads GYIG…MAKR. Lys-176 is an active-site residue. Lys-252 is an NAD(+) binding site.

It belongs to the HIBADH-related family.

This is an uncharacterized protein from Mycobacterium tuberculosis (strain CDC 1551 / Oshkosh).